The chain runs to 431 residues: Glutamate--tRNA ligase 1 (431 aa).

Residues 6–16 carry the 'HIGH' region motif; it reads PSPTGDMHIGN. The short motif at 235–239 is the 'KMSKS' region element; that stretch reads KMSKR. Lys238 is a binding site for ATP.

This sequence belongs to the class-I aminoacyl-tRNA synthetase family. Glutamate--tRNA ligase type 1 subfamily. As to quaternary structure, monomer.

The protein resides in the cytoplasm. It carries out the reaction tRNA(Glu) + L-glutamate + ATP = L-glutamyl-tRNA(Glu) + AMP + diphosphate. Catalyzes the attachment of glutamate to tRNA(Glu) in a two-step reaction: glutamate is first activated by ATP to form Glu-AMP and then transferred to the acceptor end of tRNA(Glu). The polypeptide is Glutamate--tRNA ligase 1 (Nitratiruptor sp. (strain SB155-2)).